Here is a 453-residue protein sequence, read N- to C-terminus: Cobyrinate a,c-diamide synthase (453 aa).

A GATase cobBQ-type domain is found at 250 to 440 (RIAVPFDEAF…IHTHTACLPD (191 aa)). The active-site Nucleophile is the Cys-332.

It belongs to the CobB/CbiA family. It depends on Mg(2+) as a cofactor.

It carries out the reaction cob(II)yrinate + 2 L-glutamine + 2 ATP + 2 H2O = cob(II)yrinate a,c diamide + 2 L-glutamate + 2 ADP + 2 phosphate + 2 H(+). It catalyses the reaction Ni-sirohydrochlorin + 2 L-glutamine + 2 ATP + 2 H2O = Ni-sirohydrochlorin a,c-diamide + 2 L-glutamate + 2 ADP + 2 phosphate + 2 H(+). Its pathway is cofactor biosynthesis; adenosylcobalamin biosynthesis; cob(II)yrinate a,c-diamide from sirohydrochlorin (anaerobic route): step 10/10. Catalyzes the ATP-dependent amidation of the two carboxylate groups at positions a and c of cobyrinate, using either L-glutamine or ammonia as the nitrogen source. Involved in the biosynthesis of the unique nickel-containing tetrapyrrole coenzyme F430, the prosthetic group of methyl-coenzyme M reductase (MCR), which plays a key role in methanogenesis and anaerobic methane oxidation. Catalyzes the ATP-dependent amidation of the two carboxylate groups at positions a and c of Ni-sirohydrochlorin, using L-glutamine or ammonia as the nitrogen source. This Methanosphaera stadtmanae (strain ATCC 43021 / DSM 3091 / JCM 11832 / MCB-3) protein is Cobyrinate a,c-diamide synthase.